We begin with the raw amino-acid sequence, 122 residues long: Small ribosomal subunit protein bS6 (122 aa).

The protein belongs to the bacterial ribosomal protein bS6 family.

Its function is as follows. Binds together with bS18 to 16S ribosomal RNA. In Methylibium petroleiphilum (strain ATCC BAA-1232 / LMG 22953 / PM1), this protein is Small ribosomal subunit protein bS6.